Here is a 368-residue protein sequence, read N- to C-terminus: Probable endopolygalacturonase I (368 aa).

The first 18 residues, 1–18, serve as a signal peptide directing secretion; that stretch reads MRSVEILGLAALGSLVAA. Residues 19–31 constitute a propeptide that is removed on maturation; sequence APSPSRVSNSAKK. A disulfide bridge connects residues Cys-35 and Cys-50. 2 PbH1 repeats span residues 162-192 and 193-214; these read ATNL…DIGE and SNGV…AINS. Asp-207 serves as the catalytic Proton donor. A disulfide bridge connects residues Cys-209 and Cys-225. Residue His-229 is part of the active site. 3 PbH1 repeats span residues 244-265, 273-295, and 307-328; these read VKNV…RIKT, VGDV…VIEQ, and TTGV…ASNA. Residue Asn-246 is glycosylated (N-linked (GlcNAc...) asparagine). Cystine bridges form between Cys-335/Cys-340 and Cys-359/Cys-368.

It belongs to the glycosyl hydrolase 28 family.

The protein resides in the secreted. The enzyme catalyses (1,4-alpha-D-galacturonosyl)n+m + H2O = (1,4-alpha-D-galacturonosyl)n + (1,4-alpha-D-galacturonosyl)m.. Functionally, involved in maceration and soft-rotting of plant tissue. Hydrolyzes the 1,4-alpha glycosidic bonds of de-esterified pectate in the smooth region of the plant cell wall. The protein is Probable endopolygalacturonase I (pgaI) of Aspergillus clavatus (strain ATCC 1007 / CBS 513.65 / DSM 816 / NCTC 3887 / NRRL 1 / QM 1276 / 107).